The following is an 879-amino-acid chain: Translation initiation factor IF-2 (879 aa).

Disordered stretches follow at residues 45 to 216 (AGHM…ERKR) and 228 to 293 (SYEE…EKPV). Composition is skewed to basic and acidic residues over residues 60–72 (NAAK…DKNS), 83–99 (RKTD…KISP), and 107–163 (AEKK…ERLQ). Over residues 164–173 (MEAALQAQMQ) the composition is skewed to low complexity. Basic and acidic residues-rich tracts occupy residues 174 to 216 (EQER…ERKR), 228 to 271 (SYEE…ERRN), and 280 to 291 (RNNDNKKGKFEK). One can recognise a tr-type G domain in the interval 380-549 (VRAPVVTIMG…LIQAEMLELT (170 aa)). Residues 389 to 396 (GHVDHGKT) form a G1 region. Residue 389 to 396 (GHVDHGKT) coordinates GTP. The interval 414 to 418 (GITQH) is G2. The tract at residues 435–438 (DTPG) is G3. GTP contacts are provided by residues 435–439 (DTPGH) and 489–492 (NKMD). Residues 489 to 492 (NKMD) are G4. Residues 525–527 (SAK) are G5.

Belongs to the TRAFAC class translation factor GTPase superfamily. Classic translation factor GTPase family. IF-2 subfamily.

The protein localises to the cytoplasm. One of the essential components for the initiation of protein synthesis. Protects formylmethionyl-tRNA from spontaneous hydrolysis and promotes its binding to the 30S ribosomal subunits. Also involved in the hydrolysis of GTP during the formation of the 70S ribosomal complex. The sequence is that of Translation initiation factor IF-2 from Dichelobacter nodosus (strain VCS1703A).